Reading from the N-terminus, the 145-residue chain is Neuromedin-S (145 aa).

The N-terminal stretch at 1-25 (MKYLAQFPSILAIYCFCLLQIPSSG) is a signal peptide. 3 consecutive propeptides follow at residues 26–64 (FPRPLADASDGLDIVKFEQMAYWASLSRQPKDNQDIYKR), 65–100 (FLFHYSRTQEPAHPVKTGFPPVHPLMRLAAKLADRR), and 101–103 (MKT). Asn-136 carries the post-translational modification Asparagine amide. The propeptide occupies 139–145 (NLDFDTW).

The protein belongs to the NmU family.

It localises to the secreted. In terms of biological role, implicated in the regulation of circadian rhythms through autocrine and/or paracrine actions. The protein is Neuromedin-S (NMS) of Bos taurus (Bovine).